Consider the following 549-residue polypeptide: Putative acyl-CoA synthetase YngI (549 aa).

ATP is bound by residues Thr198–Lys206, Asp423, Arg438, and Lys529.

This sequence belongs to the ATP-dependent AMP-binding enzyme family.

The chain is Putative acyl-CoA synthetase YngI (yngI) from Bacillus subtilis (strain 168).